The following is a 230-amino-acid chain: Flagellar L-ring protein (230 aa).

The first 26 residues, 1–26, serve as a signal peptide directing secretion; the sequence is MKQVRLLPSATVRAACAVAVAAFAAG. Cysteine 27 carries the N-palmitoyl cysteine lipid modification. Residue cysteine 27 is the site of S-diacylglycerol cysteine attachment.

It belongs to the FlgH family. The basal body constitutes a major portion of the flagellar organelle and consists of four rings (L,P,S, and M) mounted on a central rod.

It is found in the cell outer membrane. Its subcellular location is the bacterial flagellum basal body. In terms of biological role, assembles around the rod to form the L-ring and probably protects the motor/basal body from shearing forces during rotation. This is Flagellar L-ring protein from Burkholderia lata (strain ATCC 17760 / DSM 23089 / LMG 22485 / NCIMB 9086 / R18194 / 383).